Here is a 94-residue protein sequence, read N- to C-terminus: Dynein light chain, cytoplasmic (94 aa).

It belongs to the dynein light chain family. In terms of assembly, homodimer. Cytoplasmic dynein consists of two catalytic heavy chains (HCs) and a number of non-catalytic subunits which present intermediate chains (ICs), light intermediate chains (LICs) and light chains (LCs). Component of the nuclear pore complex (NPC). The nuclear pore complex constitutes the exclusive means of nucleocytoplasmic transport. NPCs allow the passive diffusion of ions and small molecules and the active, nuclear transport receptor-mediated bidirectional transport of macromolecules such as proteins, RNAs, ribonucleoparticles (RNPs), and ribosomal subunits across the nuclear envelope. Due to its 8-fold rotational symmetry, all subunits are present with 8 copies or multiples thereof.

It localises to the cytoplasm. The protein resides in the cytoskeleton. Its subcellular location is the nucleus. The protein localises to the nuclear pore complex. In terms of biological role, acts as one of several non-catalytic accessory components of the cytoplasmic dynein complex that are thought to be involved in linking dynein to cargos and to adapter proteins that regulate dynein function. Cytoplasmic dynein 1 acts as a motor for the intracellular retrograde motility of vesicles and organelles along microtubules. May play a role in changing or maintaining the spatial distribution of cytoskeletal structures. Also a component of the nuclear pore complex. This Emericella nidulans (strain FGSC A4 / ATCC 38163 / CBS 112.46 / NRRL 194 / M139) (Aspergillus nidulans) protein is Dynein light chain, cytoplasmic (nudG).